The chain runs to 486 residues: Malonate-semialdehyde dehydrogenase (486 aa).

Residues F154, K178, E181, R182, and S231 each coordinate NAD(+). C286 serves as the catalytic Nucleophile. Residue E386 coordinates NAD(+).

This sequence belongs to the aldehyde dehydrogenase family. IolA subfamily. As to quaternary structure, homotetramer.

It carries out the reaction 3-oxopropanoate + NAD(+) + CoA + H2O = hydrogencarbonate + acetyl-CoA + NADH + H(+). The catalysed reaction is 2-methyl-3-oxopropanoate + NAD(+) + CoA + H2O = propanoyl-CoA + hydrogencarbonate + NADH + H(+). It functions in the pathway polyol metabolism; myo-inositol degradation into acetyl-CoA; acetyl-CoA from myo-inositol: step 7/7. Functionally, catalyzes the oxidation of malonate semialdehyde (MSA) and methylmalonate semialdehyde (MMSA) into acetyl-CoA and propanoyl-CoA, respectively. Is involved in a myo-inositol catabolic pathway. Bicarbonate, and not CO2, is the end-product of the enzymatic reaction. The protein is Malonate-semialdehyde dehydrogenase of Bacillus cereus (strain ATCC 10987 / NRS 248).